The chain runs to 125 residues: Cu-Zn superoxide dismutase-like protein OPG175 (125 aa).

Cys52 and Cys102 are disulfide-bonded.

This sequence belongs to the Cu-Zn superoxide dismutase family.

It is found in the virion. The protein resides in the host cytoplasm. Functionally, superoxide dismutase-like protein with no enzymatic activity. This is Cu-Zn superoxide dismutase-like protein OPG175 (OPG175) from Monkeypox virus.